Consider the following 173-residue polypeptide: C-phycocyanin-3 beta subunit (173 aa).

Asn73 carries the post-translational modification N4-methylasparagine. The (2R,3E)-phycocyanobilin site is built by Cys83 and Cys154.

This sequence belongs to the phycobiliprotein family. Heterodimer of an alpha and a beta subunit, which further assembles into trimers and the trimers into hexamers. Post-translationally, contains two covalently linked bilin chromophores.

The protein resides in the cellular thylakoid membrane. Functionally, light-harvesting photosynthetic bile pigment-protein from the phycobiliprotein complex (phycobilisome, PBS). Phycocyanin is the major phycobiliprotein in the PBS rod. In Microchaete diplosiphon (Fremyella diplosiphon), this protein is C-phycocyanin-3 beta subunit (cpcB3).